Here is a 1227-residue protein sequence, read N- to C-terminus: Sterol 3-beta-glucosyltransferase (1227 aa).

2 disordered regions span residues 1–76 (MLKG…AASP) and 104–189 (QLAT…MTSK). Residues 48–57 (KHKEAERRLT) show a composition bias toward basic and acidic residues. Positions 114 to 135 (AGADETEDEMDEAGDETGDDAD) are enriched in acidic residues. The segment covering 154-171 (ESRRSTLFELSIEPHPES) has biased composition (basic and acidic residues). Residues 179 to 189 (TKNRRSRMTSK) are compositionally biased toward basic residues. Positions 188-229 (SKLRSKFNLDDDEELVREYPCWLLRDVLIQGHIYLTSRNLLF) constitute a GRAM 1 domain. The PH domain occupies 239-342 (SARLTGNLSI…WSSALKKQVF (104 aa)). Residues 449–469 (DAAIASEAAADAAAADTASHS) show a composition bias toward low complexity. 2 disordered regions span residues 449 to 484 (DAAI…RSTE) and 523 to 550 (TLKL…LESR). Residues 602-668 (KRFKAHFSLT…HDVENCYKEQ (67 aa)) form the GRAM 2 domain. UDP-alpha-D-glucose is bound by residues S786, R787, D789, N1060, N1088, V1089, H1091, H1104, S1107, G1108, T1109, D1128, and Q1129.

It belongs to the glycosyltransferase 28 family.

The protein localises to the cytoplasm. Its subcellular location is the membrane. The enzyme catalyses a sterol + UDP-alpha-D-glucose = a sterol 3-beta-D-glucoside + UDP + H(+). The catalysed reaction is ergosterol + UDP-alpha-D-glucose = ergosteryl 3-beta-D-glucoside + UDP + H(+). In terms of biological role, sterol glycosyltransferase responsible for the glycosylation of ergosterol to form ergosterol-glucoside. The protein is Sterol 3-beta-glucosyltransferase of Eremothecium gossypii (strain ATCC 10895 / CBS 109.51 / FGSC 9923 / NRRL Y-1056) (Yeast).